Here is a 370-residue protein sequence, read N- to C-terminus: Queuine tRNA-ribosyltransferase (370 aa).

The active-site Proton acceptor is Asp-93. Substrate is bound by residues 93-97, Asp-147, Gln-189, and Gly-216; that span reads DSGGF. The interval 247–253 is RNA binding; that stretch reads GVGSPDC. Asp-266 (nucleophile) is an active-site residue. An RNA binding; important for wobble base 34 recognition region spans residues 271–275; sequence TRIAR. The Zn(2+) site is built by Cys-304, Cys-306, Cys-309, and His-335.

It belongs to the queuine tRNA-ribosyltransferase family. In terms of assembly, homodimer. Within each dimer, one monomer is responsible for RNA recognition and catalysis, while the other monomer binds to the replacement base PreQ1. The cofactor is Zn(2+).

The enzyme catalyses 7-aminomethyl-7-carbaguanine + guanosine(34) in tRNA = 7-aminomethyl-7-carbaguanosine(34) in tRNA + guanine. It functions in the pathway tRNA modification; tRNA-queuosine biosynthesis. Functionally, catalyzes the base-exchange of a guanine (G) residue with the queuine precursor 7-aminomethyl-7-deazaguanine (PreQ1) at position 34 (anticodon wobble position) in tRNAs with GU(N) anticodons (tRNA-Asp, -Asn, -His and -Tyr). Catalysis occurs through a double-displacement mechanism. The nucleophile active site attacks the C1' of nucleotide 34 to detach the guanine base from the RNA, forming a covalent enzyme-RNA intermediate. The proton acceptor active site deprotonates the incoming PreQ1, allowing a nucleophilic attack on the C1' of the ribose to form the product. After dissociation, two additional enzymatic reactions on the tRNA convert PreQ1 to queuine (Q), resulting in the hypermodified nucleoside queuosine (7-(((4,5-cis-dihydroxy-2-cyclopenten-1-yl)amino)methyl)-7-deazaguanosine). The protein is Queuine tRNA-ribosyltransferase of Desulforamulus reducens (strain ATCC BAA-1160 / DSM 100696 / MI-1) (Desulfotomaculum reducens).